Here is a 202-residue protein sequence, read N- to C-terminus: Nascent polypeptide-associated complex subunit alpha (202 aa).

Over residues 1 to 19 the composition is skewed to basic and acidic residues; sequence MADPRVEEIVEEETPKQTV. A disordered region spans residues 1–41; it reads MADPRVEEIVEEETPKQTVEDAGSDSESEAGEANIPAGAAV. The 66-residue stretch at 45 to 110 folds into the NAC-A/B domain; sequence SRNEKKARKA…AKIEDLNSQA (66 aa). The span at 117–127 shows a compositional bias: low complexity; the sequence is QLAAAEAAAGE. A disordered region spans residues 117–165; the sequence is QLAAAEAAAGEHAGHDHEHDLGTKVPEAETKKEEEEDDGEPVDESGLEA. A compositionally biased stretch (basic and acidic residues) spans 128–149; that stretch reads HAGHDHEHDLGTKVPEAETKKE. Positions 150-162 are enriched in acidic residues; sequence EEEDDGEPVDESG. The 40-residue stretch at 163 to 202 folds into the UBA domain; that stretch reads LEAKDIELVMAQANVSRKKAVKALRENDNDIVNSIMALSI.

The protein belongs to the NAC-alpha family. As to quaternary structure, part of the nascent polypeptide-associated complex (NAC), consisting of egd2 and egd1. NAC associates with ribosomes via egd1.

It localises to the cytoplasm. Its subcellular location is the nucleus. Functionally, component of the nascent polypeptide-associated complex (NAC), a dynamic component of the ribosomal exit tunnel, protecting the emerging polypeptides from interaction with other cytoplasmic proteins to ensure appropriate nascent protein targeting. The NAC complex also promotes mitochondrial protein import by enhancing productive ribosome interactions with the outer mitochondrial membrane and blocks the inappropriate interaction of ribosomes translating non-secretory nascent polypeptides with translocation sites in the membrane of the endoplasmic reticulum. Egd2 may also be involved in transcription regulation. In Aspergillus oryzae (strain ATCC 42149 / RIB 40) (Yellow koji mold), this protein is Nascent polypeptide-associated complex subunit alpha (egd2).